The chain runs to 727 residues: Fatty acid oxidation complex subunit alpha (727 aa).

The interval 16 to 205 (NQTASVFSFD…RLGLVDDAVP (190 aa)) is enoyl-CoA hydratase. The interval 321-727 (AKIKHVGILG…MAEQNKSFYP (407 aa)) is 3-hydroxyacyl-CoA dehydrogenase.

This sequence in the N-terminal section; belongs to the enoyl-CoA hydratase/isomerase family. In the central section; belongs to the 3-hydroxyacyl-CoA dehydrogenase family. Heterotetramer of two alpha chains (FadJ) and two beta chains (FadI).

It localises to the cytoplasm. The catalysed reaction is a (3S)-3-hydroxyacyl-CoA = a (2E)-enoyl-CoA + H2O. It catalyses the reaction a 4-saturated-(3S)-3-hydroxyacyl-CoA = a (3E)-enoyl-CoA + H2O. The enzyme catalyses a (3S)-3-hydroxyacyl-CoA + NAD(+) = a 3-oxoacyl-CoA + NADH + H(+). It carries out the reaction (3S)-3-hydroxybutanoyl-CoA = (3R)-3-hydroxybutanoyl-CoA. It functions in the pathway lipid metabolism; fatty acid beta-oxidation. In terms of biological role, catalyzes the formation of a hydroxyacyl-CoA by addition of water on enoyl-CoA. Also exhibits 3-hydroxyacyl-CoA epimerase and 3-hydroxyacyl-CoA dehydrogenase activities. In Photorhabdus laumondii subsp. laumondii (strain DSM 15139 / CIP 105565 / TT01) (Photorhabdus luminescens subsp. laumondii), this protein is Fatty acid oxidation complex subunit alpha.